The chain runs to 780 residues: Zinc finger and SCAN domain-containing protein 10 (780 aa).

The segment at 1–38 is disordered; sequence MLGESVPAAVEQEQLGEVKLEEEEAVSPEDPRRPESRL. The segment covering 29 to 38 has biased composition (basic and acidic residues); it reads EDPRRPESRL. One can recognise an SCAN box domain in the interval 56–126; that stretch reads MGPRASLSRL…LLLEGIHREP (71 aa). Disordered regions lie at residues 153 to 237 and 255 to 324; these read GCAS…SRDQ and KAWP…GSLL. 2 positions are modified to phosphoserine: S162 and S208. Positions 202 to 224 are enriched in polar residues; the sequence is SSKQPLSPGPQKTFQALQESSPQ. The residue at position 268 (T268) is a Phosphothreonine. A compositionally biased stretch (basic and acidic residues) spans 268-280; the sequence is TPDKEEFKQEEPK. 14 C2H2-type zinc fingers span residues 347–370, 376–398, 404–426, 432–454, 476–498, 522–544, 550–572, 578–600, 606–628, 634–656, 662–684, 690–712, 724–746, and 752–774; these read FICADCGVSFPQLSRLKAHQLRSH, FLCLCCGKSFGRSSILKLHMRTH, HACHLCGHRFRQSSHLSKHLLTH, FLCAECGRGFQRRASLVQHLLAH, VLCSHCGQSFQRRSSLKRHLRIH, FVCSDCGKAFRRSEHLVAHRRVH, FSCQACGRSFTQSSQLVSHQRVH, YACPQCGKRFVRRASLARHLLTH, HHCTQCGKSFGQTQDLARHQRSH, CRCSECGEGFSQSAHLARHQRIH, HACDTCGHRFRNSSNLARHRRSH, YSCQTCGRSFRRNAHLRRHLATH, QECVECGKSFSRSCNLLRHLLVH, and YSCTQCGRSFSRNSHLLRHLRTH. Residue Q483 is modified to N5-methylglutamine. The tract at residues 492–520 is disordered; the sequence is KRHLRIHARDKDRRSSEGSGSRRRDSDRR. The segment covering 498-520 has biased composition (basic and acidic residues); the sequence is HARDKDRRSSEGSGSRRRDSDRR.

In terms of assembly, interacts with POU5F1/OCT4 and SOX2. Post-translationally, methylated at Gln-483 by N6AMT1.

It is found in the nucleus. In terms of biological role, embryonic stem (ES) cell-specific transcription factor required to maintain ES cell pluripotency. Can both activate and /or repress expression of target genes, depending on the context. Specifically binds the 5'-[GA]CGCNNGCG[CT]-3' DNA consensus sequence. Regulates expression of POU5F1/OCT4, ZSCAN4 and ALYREF/THOC4. In Homo sapiens (Human), this protein is Zinc finger and SCAN domain-containing protein 10 (ZSCAN10).